Consider the following 268-residue polypeptide: Lipopolysaccharide core heptose(I) kinase WaaP (268 aa).

Phosphotyrosine; by autocatalysis occurs at positions 30, 48, and 98. Residue aspartate 163 is part of the active site. Phosphotyrosine; by autocatalysis occurs at positions 165, 211, 231, 258, and 264.

The protein belongs to the protein kinase superfamily. KdkA/RfaP family. Interacts with acyl-AcpP. The WaaP hydrophobic channel can accommodate acyl chains of different lengths, but myristyl-ACP is likely its physiological binding partner. Mg(2+) serves as cofactor.

It is found in the cytoplasm. It catalyses the reaction an L-alpha-D-Hep-(1-&gt;3)-L-alpha-D-Hep-(1-&gt;5)-[alpha-Kdo-(2-&gt;4)]-alpha-Kdo-(2-&gt;6)-lipid A + ATP = an L-alpha-D-Hep-(1-&gt;3)-4-O-phospho-L-alpha-D-Hep-(1-&gt;5)-[alpha-Kdo-(2-&gt;4)]-alpha-Kdo-(2-&gt;6)-lipid A + ADP + H(+). The catalysed reaction is L-tyrosyl-[protein] + ATP = O-phospho-L-tyrosyl-[protein] + ADP + H(+). The protein operates within bacterial outer membrane biogenesis; LPS core biosynthesis. Its activity is regulated as follows. Acylated-acyl carrier protein (acyl-ACP) acts as a very tightly bound cofactor necessary for the production and stability of active WaaP kinase. In terms of biological role, kinase involved in the biosynthesis of the core oligosaccharide region of lipopolysaccharide (LPS). Catalyzes the phosphorylation of heptose I (HepI), the first heptose added to the Kdo2-lipid A module. Also has protein-tyrosine kinase activity: autophosphorylates on all Tyr residues; in vitro can phosphorylate poly(Glu,Tyr). The protein is Lipopolysaccharide core heptose(I) kinase WaaP of Pseudomonas aeruginosa (strain ATCC 15692 / DSM 22644 / CIP 104116 / JCM 14847 / LMG 12228 / 1C / PRS 101 / PAO1).